Reading from the N-terminus, the 593-residue chain is SPI-1 type 3 secretion system translocon protein SctE (593 aa).

Coiled-coil stretches lie at residues 151 to 208 (DTAK…ATDA) and 287 to 314 (EGRQAEMEKKSAEFQEETRKAEETNRIM). 2 helical membrane-spanning segments follow: residues 330-350 (VVAAVFTGGASLALAAVGLAV) and 409-429 (IVGAIVAAIAMVAVIVVVAVV).

The protein belongs to the SctE/SipB/YopB family. As to quaternary structure, the core secretion machinery of the T3SS is composed of approximately 20 different proteins, including cytoplasmic components, a base, an export apparatus and a needle. This subunit is involved in the formation of a pore, called the translocon, in host membrane.

Its subcellular location is the secreted. It is found in the host membrane. Functionally, component of the type III secretion system 1 (SPI-1 T3SS), also called injectisome, which is used to inject bacterial effector proteins into eukaryotic host cells. SipB/SctE1 and SipC/SctB are inserted into the host membrane where they form a pore and allow the translocation of effector proteins into the cytosol of target cells. The protein is SPI-1 type 3 secretion system translocon protein SctE of Salmonella dublin.